The sequence spans 201 residues: TATA-box-binding protein 2 (201 aa).

2 repeat units span residues 26–102 and 116–193.

The protein belongs to the TBP family. Belongs to the TFIID complex together with the TBP-associated factors (TAFs). Binds DNA as monomer.

The protein localises to the nucleus. Its function is as follows. General transcription factor that functions at the core of the DNA-binding multiprotein factor TFIID. Binding of TFIID to the TATA box is the initial transcriptional step of the pre-initiation complex (PIC), playing a role in the activation of eukaryotic genes transcribed by RNA polymerase II. The protein is TATA-box-binding protein 2 (TBP2) of Triticum aestivum (Wheat).